Here is a 106-residue protein sequence, read N- to C-terminus: Iron-sulfur cluster assembly protein CyaY (106 aa).

This sequence belongs to the frataxin family.

Functionally, involved in iron-sulfur (Fe-S) cluster assembly. May act as a regulator of Fe-S biogenesis. This Salmonella agona (strain SL483) protein is Iron-sulfur cluster assembly protein CyaY.